Reading from the N-terminus, the 1322-residue chain is C-Jun-amino-terminal kinase-interacting protein 3 (1322 aa).

The RH1 domain occupies Val-12–Leu-100. Positions Glu-50–Leu-80 are kinesin-binding domain (KBD); essential for its function in axon elongation. Residues Leu-66–Arg-167 adopt a coiled-coil conformation. Disordered regions lie at residues Lys-183–Val-211 and Ser-245–Asn-317. Residues Asn-210–Lys-226 form a JNK-binding domain (JBD); essential for its function in axon elongation region. Residues Ser-261–Thr-270 are compositionally biased toward low complexity. Residues Thr-266, Thr-276, and Thr-287 each carry the phosphothreonine modification. Residues Gly-271–Pro-282 are compositionally biased toward polar residues. Basic residues predominate over residues Asn-305–Ser-315. Ser-315, Ser-365, and Ser-366 each carry phosphoserine. The leucine zipper-like domain (LZ); essential for its function in axon elongation stretch occupies residues Gln-424–Ala-459. Residues Val-443–Ala-534 adopt a coiled-coil conformation. The interaction with NTRK2 stretch occupies residues Ala-459–Ala-515. The region spanning Arg-506–Pro-580 is the RH2 domain. Residues Ser-588 and Ser-662 each carry the phosphoserine modification. Disordered regions lie at residues Trp-704–Ala-754, Pro-844–Ser-952, and Arg-1281–Ala-1307. Basic and acidic residues predominate over residues Leu-724–Pro-750. Residues Ala-914–Gln-937 show a composition bias toward polar residues. Residues Glu-941–Ser-952 show a composition bias toward low complexity. Residues Gly-1285–Thr-1294 are compositionally biased toward acidic residues.

It belongs to the JIP scaffold family. In terms of assembly, forms homo- or heterooligomeric complexes. The central region of MAPK8IP3 interacts with the C-terminal of MAPK8IP2 but not MAPK8IP1. Binds specific components of the JNK signaling pathway namely MAPK8/JNK1, MAPK9/JNK2 and MAPK10/JNK3 to the N-terminal region, MAP2K4/MKK4 and MAP2K7/MKK7 to the central region and MAP3K11 to the C-terminal region. Binds the TPR motif-containing C-terminal of kinesin light chain, KLC1. Pre-assembled MAPK8IP1 scaffolding complexes are then transported as a cargo of kinesin, to the required subcellular location. Interacts with ROCK1 and this interaction is enhanced by ultraviolet-B (UVB) radiation. Interacts with SH3RF2. Interacts with NTRK3/TRKC. Interacts with NTRK2/TRKB. Post-translationally, phosphorylation by ROCK1 is crucial for the recruitment of JNK.

The protein resides in the cytoplasm. It localises to the golgi apparatus. The protein localises to the cytoplasmic vesicle. Its subcellular location is the cell projection. It is found in the growth cone. The protein resides in the axon. It localises to the dendrite. The protein localises to the perinuclear region. The JNK-interacting protein (JIP) group of scaffold proteins selectively mediates JNK signaling by aggregating specific components of the MAPK cascade to form a functional JNK signaling module. May function as a regulator of vesicle transport, through interactions with the JNK-signaling components and motor proteins. Promotes neuronal axon elongation in a kinesin- and JNK-dependent manner. Activates cofilin at axon tips via local activation of JNK, thereby regulating filopodial dynamics and enhancing axon elongation. Its binding to kinesin heavy chains (KHC), promotes kinesin-1 motility along microtubules and is essential for axon elongation and regeneration. Regulates cortical neuronal migration by mediating NTRK2/TRKB anterograde axonal transport during brain development. Acts as an adapter that bridges the interaction between NTRK2/TRKB and KLC1 and drives NTRK2/TRKB axonal but not dendritic anterograde transport, which is essential for subsequent BDNF-triggered signaling and filopodia formation. The chain is C-Jun-amino-terminal kinase-interacting protein 3 (Mapk8ip3) from Rattus norvegicus (Rat).